Reading from the N-terminus, the 169-residue chain is Small ribosomal subunit protein uS5 (169 aa).

The 65-residue stretch at 15–79 folds into the S5 DRBM domain; that stretch reads LKDQVVAINR…ESAKKNLVKV (65 aa).

Belongs to the universal ribosomal protein uS5 family. Part of the 30S ribosomal subunit. Contacts proteins S4 and S8.

Its function is as follows. With S4 and S12 plays an important role in translational accuracy. Located at the back of the 30S subunit body where it stabilizes the conformation of the head with respect to the body. This Koribacter versatilis (strain Ellin345) protein is Small ribosomal subunit protein uS5.